We begin with the raw amino-acid sequence, 539 residues long: Phosphoenolpyruvate carboxykinase (ATP) (539 aa).

The substrate site is built by Arg-64, Tyr-206, and Lys-212. ATP is bound by residues Lys-212, His-231, and 247–255 (GLSGTGKTT). Residues Lys-212 and His-231 each contribute to the Mn(2+) site. Asp-268 serves as a coordination point for Mn(2+). ATP-binding positions include Glu-296, Arg-332, 448–449 (RI), and Thr-454. Residue Arg-332 coordinates substrate.

This sequence belongs to the phosphoenolpyruvate carboxykinase (ATP) family. As to quaternary structure, monomer. Requires Mn(2+) as cofactor.

The protein resides in the cytoplasm. It catalyses the reaction oxaloacetate + ATP = phosphoenolpyruvate + ADP + CO2. Its pathway is carbohydrate biosynthesis; gluconeogenesis. Involved in the gluconeogenesis. Catalyzes the conversion of oxaloacetate (OAA) to phosphoenolpyruvate (PEP) through direct phosphoryl transfer between the nucleoside triphosphate and OAA. This is Phosphoenolpyruvate carboxykinase (ATP) from Citrobacter koseri (strain ATCC BAA-895 / CDC 4225-83 / SGSC4696).